Here is a 208-residue protein sequence, read N- to C-terminus: LexA repressor (208 aa).

The H-T-H motif DNA-binding region spans 28–48 (RAEIARQLGFRSANAAEEHLK). Catalysis depends on for autocatalytic cleavage activity residues Ser-125 and Lys-162.

This sequence belongs to the peptidase S24 family. As to quaternary structure, homodimer.

It catalyses the reaction Hydrolysis of Ala-|-Gly bond in repressor LexA.. Represses a number of genes involved in the response to DNA damage (SOS response), including recA and lexA. In the presence of single-stranded DNA, RecA interacts with LexA causing an autocatalytic cleavage which disrupts the DNA-binding part of LexA, leading to derepression of the SOS regulon and eventually DNA repair. The polypeptide is LexA repressor (Alteromonas mediterranea (strain DSM 17117 / CIP 110805 / LMG 28347 / Deep ecotype)).